The chain runs to 393 residues: Digeranylgeranylglycerophospholipid reductase 2 (393 aa).

FAD is bound by residues aspartate 33, cysteine 44, alanine 45, glycine 47, arginine 100, alanine 124, aspartate 280, glycine 292, and isoleucine 293.

It belongs to the geranylgeranyl reductase family. DGGGPL reductase subfamily. The cofactor is FAD.

It carries out the reaction a 2,3-bis-O-phytanyl-sn-glycerol 1-phospholipid + 8 A = a 2,3-bis-O-(geranylgeranyl)-sn-glycerol 1-phospholipid + 8 AH2. It catalyses the reaction 2,3-bis-O-(phytanyl)-sn-glycerol 1-phosphate + 8 A = 2,3-bis-O-(geranylgeranyl)-sn-glycerol 1-phosphate + 8 AH2. The enzyme catalyses CDP-2,3-bis-O-(geranylgeranyl)-sn-glycerol + 8 AH2 = CDP-2,3-bis-O-(phytanyl)-sn-glycerol + 8 A. The catalysed reaction is archaetidylserine + 8 AH2 = 2,3-bis-O-phytanyl-sn-glycero-3-phospho-L-serine + 8 A. It functions in the pathway membrane lipid metabolism; glycerophospholipid metabolism. Its function is as follows. Is involved in the reduction of 2,3-digeranylgeranylglycerophospholipids (unsaturated archaeols) into 2,3-diphytanylglycerophospholipids (saturated archaeols) in the biosynthesis of archaeal membrane lipids. Catalyzes the formation of archaetidic acid (2,3-di-O-phytanyl-sn-glyceryl phosphate) from 2,3-di-O-geranylgeranylglyceryl phosphate (DGGGP) via the hydrogenation of each double bond of the isoprenoid chains. Is also probably able to reduce double bonds of geranyl groups in CDP-2,3-bis-O-(geranylgeranyl)-sn-glycerol and archaetidylserine, thus acting at various stages in the biosynthesis of archaeal membrane lipids. The protein is Digeranylgeranylglycerophospholipid reductase 2 of Methanosphaera stadtmanae (strain ATCC 43021 / DSM 3091 / JCM 11832 / MCB-3).